Consider the following 282-residue polypeptide: ATP synthase gamma chain (282 aa).

Belongs to the ATPase gamma chain family. As to quaternary structure, F-type ATPases have 2 components, CF(1) - the catalytic core - and CF(0) - the membrane proton channel. CF(1) has five subunits: alpha(3), beta(3), gamma(1), delta(1), epsilon(1). CF(0) has three main subunits: a, b and c.

It localises to the cell membrane. In terms of biological role, produces ATP from ADP in the presence of a proton gradient across the membrane. The gamma chain is believed to be important in regulating ATPase activity and the flow of protons through the CF(0) complex. The chain is ATP synthase gamma chain from Clostridium botulinum (strain Loch Maree / Type A3).